We begin with the raw amino-acid sequence, 338 residues long: Ketol-acid reductoisomerase (NADP(+)) (338 aa).

The KARI N-terminal Rossmann domain maps to 1 to 181 (MNVYYDKDCD…GGGRSGIIET (181 aa)). NADP(+) contacts are provided by residues 24–27 (YGSQ), Arg-47, Ser-50, Ser-52, and 82–85 (DEFQ). His-107 is an active-site residue. Gly-133 serves as a coordination point for NADP(+). The region spanning 182-327 (TFKDETETDL…AKLRSMMPWI (146 aa)) is the KARI C-terminal knotted domain. Residues Asp-190, Glu-194, Glu-226, and Glu-230 each coordinate Mg(2+). Ser-251 provides a ligand contact to substrate.

It belongs to the ketol-acid reductoisomerase family. Mg(2+) serves as cofactor.

It carries out the reaction (2R)-2,3-dihydroxy-3-methylbutanoate + NADP(+) = (2S)-2-acetolactate + NADPH + H(+). The catalysed reaction is (2R,3R)-2,3-dihydroxy-3-methylpentanoate + NADP(+) = (S)-2-ethyl-2-hydroxy-3-oxobutanoate + NADPH + H(+). Its pathway is amino-acid biosynthesis; L-isoleucine biosynthesis; L-isoleucine from 2-oxobutanoate: step 2/4. It functions in the pathway amino-acid biosynthesis; L-valine biosynthesis; L-valine from pyruvate: step 2/4. Its function is as follows. Involved in the biosynthesis of branched-chain amino acids (BCAA). Catalyzes an alkyl-migration followed by a ketol-acid reduction of (S)-2-acetolactate (S2AL) to yield (R)-2,3-dihydroxy-isovalerate. In the isomerase reaction, S2AL is rearranged via a Mg-dependent methyl migration to produce 3-hydroxy-3-methyl-2-ketobutyrate (HMKB). In the reductase reaction, this 2-ketoacid undergoes a metal-dependent reduction by NADPH to yield (R)-2,3-dihydroxy-isovalerate. This chain is Ketol-acid reductoisomerase (NADP(+)), found in Psychrobacter sp. (strain PRwf-1).